A 999-amino-acid chain; its full sequence is Collagen alpha-1(I) chain (999 aa).

The segment at 1–999 is disordered; that stretch reads SYGYDEKSAG…PGPPGPPGPP (999 aa). Allysine is present on K7. S8 bears the Phosphoserine mark. 4-hydroxyproline is present on residues P27, P30, P33, P42, P45, P48, P62, P77, P83, P92, and P98. Over residues 65 to 79 the composition is skewed to basic and acidic residues; it reads NGDDGEAGKPGRPGE. K101 is modified (5-hydroxylysine; alternate). O-linked (Gal...) hydroxylysine; alternate glycosylation is present at K101. S107 is modified (phosphoserine). A compositionally biased stretch (low complexity) spans 115–131; that stretch reads DAGPAGPKGEPGSPGEN. P125, P128, P134, P143, P149, P170, P179, P182, P209, P212, P224, P230, P239, P245, P248, and P263 each carry 4-hydroxyproline. Low complexity predominate over residues 149 to 167; sequence PGASGPAGARGNDGATGAA. A compositionally biased stretch (pro residues) spans 169–181; sequence PPGPTGPAGPPGF. Positions 215–254 are enriched in low complexity; sequence AGAAGPAGNPGADGQPGAKGANGAPGIAGAPGFPGARGPS. 5-hydroxylysine is present on K266. Residues P272, P275, P287, P296, P311, P317, P326, and P332 each carry the 4-hydroxyproline modification. The segment covering 321–330 has biased composition (gly residues); it reads GERGGPGSRG. K341 is modified (5-hydroxylysine). P350, P359, P365, P371, P380, P383, P392, P401, P407, P419, P429, P432, P450, P468, P474, P480, P486, P492, P498, P510, P526, P532, P538, and P547 each carry 4-hydroxyproline. Low complexity predominate over residues 374–400; it reads KGLTGSPGSPGPDGKTGPPGPAGQDGR. Residues 462 to 489 show a composition bias toward low complexity; that stretch reads QGPAGSPGFQGLPGPAGPPGEAGKPGEQ. Over residues 522–535 the composition is skewed to low complexity; sequence APGAPGSQGAPGLQ. 5-hydroxylysine is present on K559. A 4-hydroxyproline mark is found at P565, P580, and P586. Low complexity predominate over residues 592 to 606; sequence SGPSGPAGPTGARGA. S595 is subject to Phosphoserine. 4-hydroxyproline occurs at positions 607, 613, 616, 625, 631, 649, 658, and 667. Positions 619 to 646 are enriched in low complexity; that stretch reads AGFAGPPGADGQPGAKGEPGDAGAKGDA. Residues 648–660 are compositionally biased toward pro residues; sequence PPGPAGPTGPPGP. At K670 the chain carries 5-hydroxylysine. Over residues 675 to 691 the composition is skewed to low complexity; that stretch reads SAGPPGATGFPGAAGRV. 2 positions are modified to 4-hydroxyproline: P679 and P685. At P693 the chain carries 3-hydroxyproline. 16 positions are modified to 4-hydroxyproline: P694, P703, P706, P727, P736, P745, P754, P772, P781, P784, P790, P805, P811, P817, P826, and P832. Residues 720–729 show a composition bias toward low complexity; sequence ETGPAGRPGE. Over residues 739-754 the composition is skewed to low complexity; that stretch reads SGEKGSPGADGPAGAP. The span at 804–814 shows a compositional bias: pro residues; the sequence is PPGPVGPPGLA. Low complexity predominate over residues 816 to 831; it reads PPGESGREGSPGAEGS. Position 841 is a 5-hydroxylysine (K841). Residues 849–864 are compositionally biased toward pro residues; that stretch reads PGPPGAPGAPGAPGPV. 4-hydroxyproline occurs at positions 852, 855, and 858. Low complexity predominate over residues 885–899; that stretch reads AGPAGARGPAGPQGP. The span at 900 to 914 shows a compositional bias: basic and acidic residues; it reads RGDKGETGEQGDRGI. 5-hydroxylysine is present on K903. A 5-hydroxylysine; alternate modification is found at K915. A glycan (O-linked (Gal...) hydroxylysine; alternate) is linked at K915. 4-hydroxyproline is present on residues P930, P933, P951, and P966. The span at 933–966 shows a compositional bias: low complexity; that stretch reads PGEQGPSGASGPAGPRGPPGSAGSPGKDGLNGLP. P971 carries the post-translational modification 3-hydroxyproline. P972 is modified (4-hydroxyproline). The span at 984–999 shows a compositional bias: pro residues; it reads VGPPGPPGPPGPPGPP. Position 986 is a 3-hydroxyproline (P986). At P987 the chain carries 4-hydroxyproline. P989 is subject to 3-hydroxyproline. A 4-hydroxyproline modification is found at P990. At P992 the chain carries 3-hydroxyproline. P993, P996, and P999 each carry 4-hydroxyproline.

This sequence belongs to the fibrillar collagen family. As to quaternary structure, trimers of one alpha 2(I) and two alpha 1(I) chains. Post-translationally, contains mostly 4-hydroxyproline. Proline residues at the third position of the tripeptide repeating unit (G-X-Y) are hydroxylated in some or all of the chains. In terms of processing, contains 3-hydroxyproline at a few sites. This modification occurs on the first proline residue in the sequence motif Gly-Pro-Hyp, where Hyp is 4-hydroxyproline. Lysine residues at the third position of the tripeptide repeating unit (G-X-Y) are 5-hydroxylated in some or all of the chains. Post-translationally, O-glycosylated on hydroxylated lysine residues. The O-linked glycan consists of a Glc-Gal disaccharide. As to expression, expressed in bones.

It localises to the secreted. Its subcellular location is the extracellular space. The protein localises to the extracellular matrix. In terms of biological role, type I collagen is a member of group I collagen (fibrillar forming collagen). The sequence is that of Collagen alpha-1(I) chain from Choloepus hoffmanni (Hoffmann's two-fingered sloth).